The following is a 593-amino-acid chain: Glyoxylate carboligase (593 aa).

This sequence belongs to the TPP enzyme family. As to quaternary structure, homotetramer. The cofactor is Mg(2+). Thiamine diphosphate serves as cofactor.

The enzyme catalyses 2 glyoxylate + H(+) = 2-hydroxy-3-oxopropanoate + CO2. It functions in the pathway organic acid metabolism; glycolate degradation; 3-phospho-D-glycerate from glycolate: step 2/4. Catalyzes the condensation of two molecules of glyoxylate to give 2-hydroxy-3-oxopropanoate (also termed tartronate semialdehyde). This chain is Glyoxylate carboligase (gcl), found in Escherichia coli O157:H7.